The primary structure comprises 117 residues: Large ribosomal subunit protein bL20c (117 aa).

It belongs to the bacterial ribosomal protein bL20 family.

It is found in the plastid. It localises to the chloroplast. Functionally, binds directly to 23S ribosomal RNA and is necessary for the in vitro assembly process of the 50S ribosomal subunit. It is not involved in the protein synthesizing functions of that subunit. This Barbarea verna (Land cress) protein is Large ribosomal subunit protein bL20c.